Consider the following 210-residue polypeptide: Endonuclease III (210 aa).

The 20-residue stretch at Phe-108–Asn-127 folds into the HhH domain. Cys-187, Cys-194, Cys-197, and Cys-203 together coordinate [4Fe-4S] cluster.

Belongs to the Nth/MutY family. It depends on [4Fe-4S] cluster as a cofactor.

It carries out the reaction 2'-deoxyribonucleotide-(2'-deoxyribose 5'-phosphate)-2'-deoxyribonucleotide-DNA = a 3'-end 2'-deoxyribonucleotide-(2,3-dehydro-2,3-deoxyribose 5'-phosphate)-DNA + a 5'-end 5'-phospho-2'-deoxyribonucleoside-DNA + H(+). In terms of biological role, DNA repair enzyme that has both DNA N-glycosylase activity and AP-lyase activity. The DNA N-glycosylase activity releases various damaged pyrimidines from DNA by cleaving the N-glycosidic bond, leaving an AP (apurinic/apyrimidinic) site. The AP-lyase activity cleaves the phosphodiester bond 3' to the AP site by a beta-elimination, leaving a 3'-terminal unsaturated sugar and a product with a terminal 5'-phosphate. In Rickettsia conorii (strain ATCC VR-613 / Malish 7), this protein is Endonuclease III.